The following is a 336-amino-acid chain: Fructose-1,6-bisphosphatase class 1 (336 aa).

Positions 92, 115, 117, and 118 each coordinate Mg(2+). Residues 118–121, Asn-211, Tyr-244, 262–264, and Lys-274 contribute to the substrate site; these read DGSS and YLY. Glu-280 contributes to the Mg(2+) binding site.

It belongs to the FBPase class 1 family. As to quaternary structure, homotetramer. It depends on Mg(2+) as a cofactor.

The protein localises to the cytoplasm. The catalysed reaction is beta-D-fructose 1,6-bisphosphate + H2O = beta-D-fructose 6-phosphate + phosphate. It functions in the pathway carbohydrate biosynthesis; gluconeogenesis. The sequence is that of Fructose-1,6-bisphosphatase class 1 from Vibrio atlanticus (strain LGP32) (Vibrio splendidus (strain Mel32)).